Reading from the N-terminus, the 1454-residue chain is Serine/threonine-protein kinase VPS15 (1454 aa).

The N-myristoyl glycine moiety is linked to residue Gly-2. The region spanning 27-300 (VHYVSQLNSS…LLNKYRGIFF (274 aa)) is the Protein kinase domain. ATP is bound by residues 33–41 (LNSSRFLKT) and Lys-54. The active-site Proton acceptor is Asp-147. HEAT repeat units follow at residues 460–497 (NKIDRVVPYFVCCFEDSDQDVQALSLLTLIQVLTSVRK), 576–613 (KLIQSVEDLTVSFLTDNDTYVKMALLQNILPLCKFFGR), 615–652 (RTNDIILSHLITYLNDKDPALRVSLIQTISGISILLGT), and 654–691 (TLEQYILPLLIQTITDSEELVVISVLQSLKSLFKTGLI). WD repeat units follow at residues 1078–1118 (NEPN…VGEV), 1126–1165 (DCSSTVTQITMIPNFDAFAVSSKDGQIIVLKVNHYQQESE), 1229–1268 (PRHGAVSSICIDEECCVLILGTTRGIIDIWDIRFNVLIRS), 1275–1315 (APIT…CQYA), 1344–1382 (RSLNALSTISVSNDKILLTDEATSSIVMFSLNELSSSKA), and 1422–1454 (YHHDIINSISTCEVDETPLLVACDNSGLIGIFQ).

This sequence belongs to the protein kinase superfamily. Ser/Thr protein kinase family. In terms of assembly, component of the autophagy-specific VPS34 PI3-kinase complex I composed of VPS15, VPS30, VPS34, ATG14 and ATG38; and of the VPS34 PI3-kinase complex II composed of VPS15, VPS30, VPS34 and VPS38. Interacts directly with ATG14 and GPA1. Interacts directly with VPS34. In terms of processing, autophosphorylated.

It is found in the golgi apparatus. It localises to the trans-Golgi network membrane. The protein resides in the endosome membrane. It carries out the reaction L-seryl-[protein] + ATP = O-phospho-L-seryl-[protein] + ADP + H(+). It catalyses the reaction L-threonyl-[protein] + ATP = O-phospho-L-threonyl-[protein] + ADP + H(+). Functionally, serine/threonine-protein kinase required for cytoplasm to vacuole transport (Cvt) and autophagy as a part of the autophagy-specific VPS34 PI3-kinase complex I. This complex is essential to recruit the ATG8-phosphatidylinositol conjugate and the ATG12-ATG5 conjugate to the pre-autophagosomal structure. Is also involved in endosome-to-Golgi retrograde transport as part of the VPS34 PI3-kinase complex II. This second complex is required for the endosome-to-Golgi retrieval of PEP1 and KEX2, and the recruitment of VPS5 and VPS7, two components of the retromer complex, to endosomal membranes (probably through the synthesis of a specific pool of phosphatidylinositol 3-phosphate recruiting the retromer to the endosomes). By regulating VPS34 kinase activity, VPS15 appears to be essential for the efficient delivery of soluble hydrolases to the yeast vacuole. May function as a G protein beta subunit to propagate the pheromone response at the endosome with GPA1. In Saccharomyces cerevisiae (strain ATCC 204508 / S288c) (Baker's yeast), this protein is Serine/threonine-protein kinase VPS15.